A 446-amino-acid polypeptide reads, in one-letter code: ATP synthase subunit b-delta (446 aa).

The segment at 1 to 168 (MSTFIGQLFG…PATADVDYPL (168 aa)) is ATP synthase subunit b. Residues 4–24 (FIGQLFGFAVIVYLVWRFIVP) form a helical membrane-spanning segment. The tract at residues 169–446 (LAKMRSASRR…LAAAEARLPD (278 aa)) is ATP synthase subunit delta.

The protein in the N-terminal section; belongs to the ATPase B chain family. It in the C-terminal section; belongs to the ATPase delta chain family. In terms of assembly, F-type ATPases have 2 components, F(1) - the catalytic core - and F(0) - the membrane proton channel. F(1) has five subunits: alpha(3), beta(3), gamma(1), delta(1), epsilon(1). F(0) has three main subunits: a(1), b(2) and c(10-14). The alpha and beta chains form an alternating ring which encloses part of the gamma chain. F(1) is attached to F(0) by a central stalk formed by the gamma and epsilon chains, while a peripheral stalk is formed by the delta and b chains.

It is found in the cell membrane. Its function is as follows. F(1)F(0) ATP synthase produces ATP from ADP in the presence of a proton or sodium gradient. F-type ATPases consist of two structural domains, F(1) containing the extramembraneous catalytic core and F(0) containing the membrane proton channel, linked together by a central stalk and a peripheral stalk. During catalysis, ATP synthesis in the catalytic domain of F(1) is coupled via a rotary mechanism of the central stalk subunits to proton translocation. Functionally, this fusion protein includes a component of the F(0) channel (subunit b) and of the F(1) subunit (subunit delta). Two copies of subunit b and one of delta together form the peripheral 'stator' stalk which links F(1) to F(0). The sequence is that of ATP synthase subunit b-delta (atpFH) from Mycobacterium bovis (strain ATCC BAA-935 / AF2122/97).